The sequence spans 191 residues: Potassium-transporting ATPase KdpC subunit (191 aa).

The chain crosses the membrane as a helical span at residues 8-28; the sequence is LFLFLLLLLVTGLAYPLLTTV.

This sequence belongs to the KdpC family. In terms of assembly, the system is composed of three essential subunits: KdpA, KdpB and KdpC.

It is found in the cell inner membrane. Part of the high-affinity ATP-driven potassium transport (or Kdp) system, which catalyzes the hydrolysis of ATP coupled with the electrogenic transport of potassium into the cytoplasm. This subunit acts as a catalytic chaperone that increases the ATP-binding affinity of the ATP-hydrolyzing subunit KdpB by the formation of a transient KdpB/KdpC/ATP ternary complex. The chain is Potassium-transporting ATPase KdpC subunit from Pectobacterium atrosepticum (strain SCRI 1043 / ATCC BAA-672) (Erwinia carotovora subsp. atroseptica).